The primary structure comprises 721 residues: Ophiobolin F synthase oblA (721 aa).

Residues Y5 to E325 form a (7Z)-ophiobola-7,19-dien-3-ol synthase region. Mg(2+)-binding residues include D97 and D101. D97 lines the substrate pocket. The short motif at D97–D101 is the DDXXD 1 element. Substrate contacts are provided by residues R185 to D188, N229, S233 to E237, and R316 to Y317. An NSE/DTE motif is present at residues N229–E237. Residues L326–V721 are geranylfarnesyl diphosphate synthase. Positions S348 to P387 are disordered. Residues V372–V384 are compositionally biased toward low complexity. Residues K432, R435, and H464 each coordinate isopentenyl diphosphate. Mg(2+)-binding residues include D471 and D475. Residues D471 to D475 carry the DDXXD 2 motif. R480 contributes to the dimethylallyl diphosphate binding site. R481 serves as a coordination point for isopentenyl diphosphate. 6 residues coordinate dimethylallyl diphosphate: K558, T559, Q597, N604, K614, and K624.

This sequence in the N-terminal section; belongs to the terpene synthase family. The protein in the C-terminal section; belongs to the FPP/GGPP synthase family. The cofactor is Mg(2+).

The enzyme catalyses isopentenyl diphosphate + (2E,6E)-farnesyl diphosphate = (2E,6E,10E)-geranylgeranyl diphosphate + diphosphate. It carries out the reaction isopentenyl diphosphate + (2E,6E,10E)-geranylgeranyl diphosphate = (2E,6E,10E,14E)-geranylfarnesyl diphosphate + diphosphate. It catalyses the reaction (2E,6E,10E,14E)-geranylfarnesyl diphosphate + H2O = ophiobolin F + diphosphate. It functions in the pathway secondary metabolite biosynthesis; terpenoid biosynthesis. In terms of biological role, bifunctional sesterterpene synthase; part of the gene cluster that mediates the biosynthesis of the sesterterpenes ophiobolins, fungal phytotoxins with potential anti-cancer activities. The first step of the pathway is performed by the sesterterpene synthase oblA that possesses both prenyl transferase and terpene cyclase activity, converting isopentenyl diphosphate and dimethylallyl diphosphate into geranylfarnesyl diphosphate (GFPP) and further converting GFPP into ophiobolin F, respectively. Other sesterterpenoids (C(25) terpenoids) are found as minor products of oblA. The cytochrome P450 monooxygenase oblB then catalyzes a four-step oxidative transformation of ophiobolin F to yield ophiobolin C. The FAD-dependent oxidoreductase oblC might be involved in a later oxidation step that produces ophiobolin A. This is Ophiobolin F synthase oblA from Cochliobolus heterostrophus (strain C5 / ATCC 48332 / race O) (Southern corn leaf blight fungus).